Consider the following 92-residue polypeptide: RIIa domain-containing protein 1 (92 aa).

The region spanning 43–77 (KEVELLISGFFREMFLKRPDNIPEFAADYFTDPRL) is the RIIa domain.

This Bos taurus (Bovine) protein is RIIa domain-containing protein 1 (RIIAD1).